The sequence spans 649 residues: Exoribonuclease 2 (649 aa).

In terms of domain architecture, RNB spans 190–517; sequence RKDLTDLDFI…NHRLLKSIIK (328 aa). Residues 562–644 form the S1 motif domain; sequence NQKFNAEITD…KTRSIIAKPV (83 aa).

This sequence belongs to the RNR ribonuclease family. RNase II subfamily.

The protein localises to the cytoplasm. The catalysed reaction is Exonucleolytic cleavage in the 3'- to 5'-direction to yield nucleoside 5'-phosphates.. In terms of biological role, involved in mRNA degradation. Hydrolyzes single-stranded polyribonucleotides processively in the 3' to 5' direction. The chain is Exoribonuclease 2 from Buchnera aphidicola subsp. Acyrthosiphon pisum (strain 5A).